Here is a 409-residue protein sequence, read N- to C-terminus: Protein naked cuticle homolog 2 (409 aa).

A lipid anchor (N-myristoyl glycine) is attached at Gly-2. One can recognise an EF-hand domain in the interval 109 to 144 (AEDNRQEWVFTLYDFDNSGKVTKEDMSSLMHTIYDV). Ca(2+) is bound by residues Asp-122, Asp-124, Ser-126, Lys-128, and Asp-133. Disordered stretches follow at residues 160-224 (LRVK…YCVD), 243-315 (TSRF…RYPG), 346-366 (SHTH…RIRS), and 388-409 (RHEH…YHQT). Composition is skewed to basic and acidic residues over residues 171 to 185 (AARR…RETS) and 193 to 224 (VRSE…YCVD). Residues 247 to 268 (DSSSPDADQDPPSRSSHSQSRP) are compositionally biased toward low complexity. The segment covering 389–409 (HEHHHHHEHHHHHHYHHYHQT) has biased composition (basic residues).

The protein belongs to the NKD family. Expressed ubiquitously until 1 dpf, when expression becomes confined to the anterior CNS, with slight expression in the developing tail.

It is found in the cell membrane. The protein localises to the cytoplasm. In terms of biological role, cell autonomous antagonist of both the canonical and non-canonical Wnt signaling pathways. The chain is Protein naked cuticle homolog 2 (nkd2) from Danio rerio (Zebrafish).